Consider the following 217-residue polypeptide: Large ribosomal subunit protein uL1 (217 aa).

This sequence belongs to the universal ribosomal protein uL1 family. Part of the 50S ribosomal subunit.

Its function is as follows. Binds directly to 23S rRNA. The L1 stalk is quite mobile in the ribosome, and is involved in E site tRNA release. Functionally, protein L1 is also a translational repressor protein, it controls the translation of the L11 operon by binding to its mRNA. The polypeptide is Large ribosomal subunit protein uL1 (Wolbachia pipientis wMel).